We begin with the raw amino-acid sequence, 953 residues long: Serine-aspartate repeat-containing protein C (953 aa).

An N-terminal signal peptide occupies residues 1–50; sequence MNNKKTATNRKGMIPNRLNKFSIRKYSVGTASILVGTTLIFGLSGHEAKA. A disordered region spans residues 51-160; sequence AEHTNGELNQ…AKNVSTTPKT (110 aa). The tract at residues 51-495 is ligand binding A region; that stretch reads AEHTNGELNQ…GSSTANGDQK (445 aa). Positions 56 to 71 are enriched in polar residues; it reads GELNQSKNETTAPSEN. Residues 72–83 show a composition bias toward basic and acidic residues; the sequence is KTTEKVDSRQLK. Polar residues predominate over residues 84–114; that stretch reads DNTQTATADQPKVTMSDSATVKETSSNMQSP. Positions 115–132 are enriched in low complexity; sequence QNATASQSTTQTSNVTTN. The span at 133-160 shows a compositional bias: polar residues; sequence DKSSTTYSNETDKSNLTQAKNVSTTPKT. 2 CNA-B domains span residues 496–606 and 607–717; these read KYNL…YKTP and KYSL…EEET. Residues 678 to 933 form a disordered region; that stretch reads TQTGTNTTED…NNSNNGTLFG (256 aa). 2 stretches are compositionally biased toward acidic residues: residues 685 to 695 and 712 to 892; these read TEDDKDADGGE and YYEE…DSDS. Positions 916–920 match the LPXTG sorting signal motif; that stretch reads LPETG. Residues 918-933 show a composition bias toward low complexity; it reads ETGSENNNSNNGTLFG. A Pentaglycyl murein peptidoglycan amidated threonine modification is found at Thr919. The propeptide at 920 to 953 is removed by sortase; it reads GSENNNSNNGTLFGGLFAALGSLLLFGRRKKQNK.

It belongs to the serine-aspartate repeat-containing protein (SDr) family. Homodimerizes; via N2-Domain. Interacts with host NRXN1; this interaction mediates bacterial attachment to host cells.

It localises to the secreted. Its subcellular location is the cell wall. Cell surface-associated calcium-binding protein which plays an important role in adhesion and pathogenesis. Mediates interactions with components of the extracellular matrix such as host NRXN1 to promote bacterial adhesion. The polypeptide is Serine-aspartate repeat-containing protein C (sdrC) (Staphylococcus aureus (strain Mu50 / ATCC 700699)).